The primary structure comprises 275 residues: 2-dehydro-3-deoxyphosphooctonate aldolase (275 aa).

Belongs to the KdsA family.

It is found in the cytoplasm. The catalysed reaction is D-arabinose 5-phosphate + phosphoenolpyruvate + H2O = 3-deoxy-alpha-D-manno-2-octulosonate-8-phosphate + phosphate. The protein operates within carbohydrate biosynthesis; 3-deoxy-D-manno-octulosonate biosynthesis; 3-deoxy-D-manno-octulosonate from D-ribulose 5-phosphate: step 2/3. It participates in bacterial outer membrane biogenesis; lipopolysaccharide biosynthesis. The protein is 2-dehydro-3-deoxyphosphooctonate aldolase of Francisella tularensis subsp. mediasiatica (strain FSC147).